The chain runs to 367 residues: Heme A synthase 2 (367 aa).

The next 5 helical transmembrane spans lie at 28–48 (MVAI…GIGA), 114–134 (MWGR…LWTG), 143–163 (WLVT…WMVA), 180–200 (VHYC…LTVL), and 221–241 (MAMG…FLSG). Residue His284 coordinates heme. 3 consecutive transmembrane segments (helical) span residues 286 to 306 (LLGT…IRAD), 314 to 334 (AFLV…TTLV), and 340 to 360 (IGIV…WAWF). Position 344 (His344) interacts with heme.

The protein belongs to the COX15/CtaA family. Type 2 subfamily. Interacts with CtaB. The cofactor is heme b.

Its subcellular location is the cell membrane. The catalysed reaction is Fe(II)-heme o + 2 A + H2O = Fe(II)-heme a + 2 AH2. It participates in porphyrin-containing compound metabolism; heme A biosynthesis; heme A from heme O: step 1/1. Catalyzes the conversion of heme O to heme A by two successive hydroxylations of the methyl group at C8. The first hydroxylation forms heme I, the second hydroxylation results in an unstable dihydroxymethyl group, which spontaneously dehydrates, resulting in the formyl group of heme A. This is Heme A synthase 2 from Acidiphilium cryptum (strain JF-5).